The following is a 309-amino-acid chain: Glutaminase (309 aa).

7 residues coordinate substrate: serine 65, asparagine 117, glutamate 162, asparagine 169, tyrosine 193, tyrosine 245, and valine 263.

The protein belongs to the glutaminase family. Homotetramer.

The catalysed reaction is L-glutamine + H2O = L-glutamate + NH4(+). This is Glutaminase from Bacillus cytotoxicus (strain DSM 22905 / CIP 110041 / 391-98 / NVH 391-98).